The chain runs to 357 residues: tRNA/tmRNA (uracil-C(5))-methyltransferase (357 aa).

Residues Gln-185, Tyr-212, Asn-217, Glu-233, and Asp-291 each coordinate S-adenosyl-L-methionine. Residue Cys-316 is the Nucleophile of the active site. Residue Glu-350 is the Proton acceptor of the active site.

The protein belongs to the class I-like SAM-binding methyltransferase superfamily. RNA M5U methyltransferase family. TrmA subfamily.

It carries out the reaction uridine(54) in tRNA + S-adenosyl-L-methionine = 5-methyluridine(54) in tRNA + S-adenosyl-L-homocysteine + H(+). The enzyme catalyses uridine(341) in tmRNA + S-adenosyl-L-methionine = 5-methyluridine(341) in tmRNA + S-adenosyl-L-homocysteine + H(+). Functionally, dual-specificity methyltransferase that catalyzes the formation of 5-methyluridine at position 54 (m5U54) in all tRNAs, and that of position 341 (m5U341) in tmRNA (transfer-mRNA). The chain is tRNA/tmRNA (uracil-C(5))-methyltransferase from Campylobacter hominis (strain ATCC BAA-381 / DSM 21671 / CCUG 45161 / LMG 19568 / NCTC 13146 / CH001A).